Consider the following 478-residue polypeptide: Glycogen synthase (478 aa).

Position 20 (Lys20) interacts with ADP-alpha-D-glucose.

This sequence belongs to the glycosyltransferase 1 family. Bacterial/plant glycogen synthase subfamily.

The catalysed reaction is [(1-&gt;4)-alpha-D-glucosyl](n) + ADP-alpha-D-glucose = [(1-&gt;4)-alpha-D-glucosyl](n+1) + ADP + H(+). It participates in glycan biosynthesis; glycogen biosynthesis. Functionally, synthesizes alpha-1,4-glucan chains using ADP-glucose. This is Glycogen synthase from Cereibacter sphaeroides (strain ATCC 17025 / ATH 2.4.3) (Rhodobacter sphaeroides).